The following is a 619-amino-acid chain: Enolase 4 (619 aa).

Basic and acidic residues predominate over residues 173 to 184; it reads DKERKELEKSQE. Residues 173 to 236 are disordered; the sequence is DKERKELEKS…PPEPPEPVLH (64 aa). Over residues 188 to 206 the composition is skewed to pro residues; the sequence is PAPPPVTLPPPPPPPPPPP. A substrate-binding site is contributed by Glu-302. Residues 333 to 354 form a disordered region; the sequence is TLPPPKQETKKGHNGSKRAQPP. Residue Lys-497 is the Proton acceptor of the active site. Lys-548 is a binding site for substrate.

It belongs to the enolase family. In terms of assembly, interacts with ENO1. Isoform 1 and isoform 4 interact with AKAP4. In terms of processing, synthesized as an approximately 70-kDa precursor, which then undergoes proteolytic cleavage to an approximately 60-kDa enzyme; HOATZ associates directly or indirectly with ENO4 to mediate this process before its transport to mature flagella. In terms of tissue distribution, testis-specific. Expressed in spermatids and ependyma (at protein level). As to expression, expressed at higher levels in late spermatids than in pachytene spermatocytes. Expressed at higher levels in pachytene spermatocytes than in late spermatids.

The catalysed reaction is (2R)-2-phosphoglycerate = phosphoenolpyruvate + H2O. The protein operates within carbohydrate degradation; glycolysis; pyruvate from D-glyceraldehyde 3-phosphate: step 4/5. Required for sperm motility, function and male fertility. May be involved in the normal assembly of the sperm fibrous sheath and provides most of the enolase activity in sperm. The chain is Enolase 4 (Eno4) from Mus musculus (Mouse).